Here is a 686-residue protein sequence, read N- to C-terminus: Delta-like protein 4 (686 aa).

An N-terminal signal peptide occupies residues 1–27; the sequence is MTPGSRSACRWALLLLAVLWPQQRAAG. At 28-530 the chain is on the extracellular side; it reads SGIFQLRLQE…PVGLPPSFPW (503 aa). 2 disulfide bridges follow: cysteine 51-cysteine 55 and cysteine 62-cysteine 75. Residues asparagine 79, asparagine 109, and asparagine 162 are each glycosylated (N-linked (GlcNAc...) asparagine). In terms of domain architecture, DSL spans 174-218; it reads VVCSDNYYGDSCSRLCKKRDDHFGHYECQPDGSLSCLPGWTGKYC. An intrachain disulfide couples cysteine 176 to cysteine 185. 2 interaction with Notch1 regions span residues 186–188 and 192–196; these read SRL and RDDHF. 26 disulfide bridges follow: cysteine 189–cysteine 201, cysteine 209–cysteine 218, cysteine 223–cysteine 234, cysteine 227–cysteine 240, cysteine 242–cysteine 251, cysteine 254–cysteine 265, cysteine 260–cysteine 271, cysteine 273–cysteine 282, cysteine 289–cysteine 301, cysteine 295–cysteine 311, cysteine 313–cysteine 322, cysteine 329–cysteine 340, cysteine 334–cysteine 349, cysteine 351–cysteine 360, cysteine 367–cysteine 378, cysteine 372–cysteine 389, cysteine 391–cysteine 400, cysteine 407–cysteine 418, cysteine 412–cysteine 427, cysteine 429–cysteine 438, cysteine 445–cysteine 456, cysteine 450–cysteine 465, cysteine 467–cysteine 476, cysteine 485–cysteine 496, cysteine 490–cysteine 507, and cysteine 509–cysteine 518. EGF-like domains follow at residues 219–252, 256–283, 285–323, 325–361, 363–401, 403–439, 441–477, and 481–519; these read DQPI…PLCN, PHNG…LFCD, DLNY…EHCE, ELSK…QHCE, STLT…SNCE, KVDR…THCE, HISD…RRCE, and TNDA…SRCE. The helical transmembrane segment at 531–551 threads the bilayer; the sequence is VAVSLGVGLVVLLVLLVMVAV. Topologically, residues 552–686 are cytoplasmic; it reads AVRQLRLRRP…RNECVIATEV (135 aa).

In terms of assembly, interacts with NOTCH4. Interacts (via N-terminal DSL and MNNL domains) with NOTCH1 (via EGF-like domains).

The protein resides in the cell membrane. In terms of biological role, involved in the Notch signaling pathway as Notch ligand. Activates NOTCH1 and NOTCH4. Involved in angiogenesis; negatively regulates endothelial cell proliferation and migration and angiogenic sprouting. Essential for retinal progenitor proliferation. Required for suppressing rod fates in late retinal progenitors as well as for proper generation of other retinal cell types. During spinal cord neurogenesis, inhibits V2a interneuron fate. This Rattus norvegicus (Rat) protein is Delta-like protein 4.